Consider the following 185-residue polypeptide: MANVIIEKAKERMTQSHQSLAREFGGIRAGRANASLLDRVHVEYYGVETPLNQIASITIPEARVLLVTPFDKSSLKDIERALNASDLGITPANDGSVIRLVIPALTEETRRDLAKEVKKVGENAKVAVRNIRRDAMDEAKKQEKAKEITEDELKTLEKDIQKVTDDAVKHIDDMTANKEKELLEV.

Belongs to the RRF family.

It localises to the cytoplasm. Functionally, responsible for the release of ribosomes from messenger RNA at the termination of protein biosynthesis. May increase the efficiency of translation by recycling ribosomes from one round of translation to another. This Streptococcus pneumoniae serotype 19F (strain G54) protein is Ribosome-recycling factor.